Here is a 226-residue protein sequence, read N- to C-terminus: MLLHIPHVLTREQVRACRARLDAADWADGRITAGSQSAQVKRNLQLPQSSPVAQELSAQVEQTLRQHPLFFSAALPKRFFPPLFNRYEGGMNFGNHVDNALRYLPGTTDAVRTDVSATLFLSDPDEYDGGELVVEDTYGVHSVKLPAGDIVVYPSTSLHRVEPVSRGARVASFMWIQSLVREDARRTLLFDMDMNIQRLRERHGDTEELVGLTSAYHNLLRLWAEV.

The Fe2OG dioxygenase domain maps to 78–178; the sequence is RFFPPLFNRY…RVASFMWIQS (101 aa). 3 residues coordinate Fe cation: histidine 96, aspartate 98, and histidine 159. Arginine 169 contacts 2-oxoglutarate.

Fe(2+) serves as cofactor. L-ascorbate is required as a cofactor.

The chain is PKHD-type hydroxylase LHK_00496 from Laribacter hongkongensis (strain HLHK9).